Consider the following 458-residue polypeptide: SH2 domain-containing protein 7 (458 aa).

Residues 51-142 enclose the SH2 domain; the sequence is WFHGFITRKQ…PFGETLAAAC (92 aa). 2 disordered regions span residues 204–235 and 267–326; these read RSVSDEVSAEVPTRVPPIPRRSPSLLDESPAG and AGSL…TLGS. Over residues 278-288 the composition is skewed to basic and acidic residues; sequence PSGKLSDEDQN. The segment covering 304–326 has biased composition (polar residues); it reads QGSTMPYTSLGFSLPPSSETLGS.

In Mus musculus (Mouse), this protein is SH2 domain-containing protein 7 (Sh2d7).